We begin with the raw amino-acid sequence, 98 residues long: NADH-ubiquinone oxidoreductase chain 4L (98 aa).

The next 3 helical transmembrane spans lie at 1-21 (MNLI…GLIF), 26-46 (IINI…LFVL), and 61-81 (LYIL…VVIL).

Belongs to the complex I subunit 4L family.

It is found in the mitochondrion membrane. The catalysed reaction is a ubiquinone + NADH + 5 H(+)(in) = a ubiquinol + NAD(+) + 4 H(+)(out). In terms of biological role, core subunit of the mitochondrial membrane respiratory chain NADH dehydrogenase (Complex I) that is believed to belong to the minimal assembly required for catalysis. Complex I functions in the transfer of electrons from NADH to the respiratory chain. The immediate electron acceptor for the enzyme is believed to be ubiquinone. In Dictyostelium discoideum (Social amoeba), this protein is NADH-ubiquinone oxidoreductase chain 4L (nad4L).